A 404-amino-acid chain; its full sequence is Probable ketol-acid reductoisomerase, mitochondrial (404 aa).

A KARI N-terminal Rossmann domain is found at 63 to 253 (TKENVWERSD…AVGSGFIYQT (191 aa)). NADP(+) is bound by residues 91-100 (GYGSQGHGQG), 115-120 (RKDGAS), and 153-157 (SDAAQ). The active site involves His178. A KARI C-terminal knotted domain is found at 254 to 401 (TFKKEVISDL…EVVRSLRPEH (148 aa)). Ser261 is subject to Phosphoserine. Residues Asp262, Glu266, Glu298, and Glu302 each coordinate Mg(2+). Ser324 contacts substrate.

This sequence belongs to the ketol-acid reductoisomerase family. Requires Mg(2+) as cofactor.

It is found in the mitochondrion. It carries out the reaction (2R)-2,3-dihydroxy-3-methylbutanoate + NADP(+) = (2S)-2-acetolactate + NADPH + H(+). The enzyme catalyses (2R,3R)-2,3-dihydroxy-3-methylpentanoate + NADP(+) = (S)-2-ethyl-2-hydroxy-3-oxobutanoate + NADPH + H(+). It participates in amino-acid biosynthesis; L-isoleucine biosynthesis; L-isoleucine from 2-oxobutanoate: step 2/4. Its pathway is amino-acid biosynthesis; L-valine biosynthesis; L-valine from pyruvate: step 2/4. The polypeptide is Probable ketol-acid reductoisomerase, mitochondrial (ilv5) (Schizosaccharomyces pombe (strain 972 / ATCC 24843) (Fission yeast)).